Reading from the N-terminus, the 187-residue chain is NAC domain-containing protein 104 (187 aa).

The region spanning 3 to 155 (LPPGFRFFPT…KWVICRVYEQ (153 aa)) is the NAC domain. A DNA-binding region spans residues 94-161 (VGIKKYLTFY…VYEQNCSEEE (68 aa)). Positions 118–142 (LPDSSSSSSRSSKRSSRASSSSHKP) are disordered.

Expressed in root xylem vessels. Expressed in stems, vascular tissue of cauline leaves and tracheary elements of sepals.

It localises to the nucleus. Probable transcription factor that influences tracheary elements and xylem development by negatively regulating secondary cell wall fiber synthesis and programmed cell death. The protein is NAC domain-containing protein 104 of Arabidopsis thaliana (Mouse-ear cress).